Here is a 136-residue protein sequence, read N- to C-terminus: Large ribosomal subunit protein uL16 (136 aa).

Belongs to the universal ribosomal protein uL16 family. Part of the 50S ribosomal subunit.

Functionally, binds 23S rRNA and is also seen to make contacts with the A and possibly P site tRNAs. The polypeptide is Large ribosomal subunit protein uL16 (Psychromonas ingrahamii (strain DSM 17664 / CCUG 51855 / 37)).